The chain runs to 327 residues: DNA-directed RNA polymerase subunit alpha (327 aa).

The tract at residues 1–243 is alpha N-terminal domain (alpha-NTD); sequence MEKFLKYEIK…EHLNPIVNVN (243 aa). The segment at 260–327 is alpha C-terminal domain (alpha-CTD); that stretch reads RVRSFAKQIE…VHELGLKLRS (68 aa).

The protein belongs to the RNA polymerase alpha chain family. Homodimer. The RNAP catalytic core consists of 2 alpha, 1 beta, 1 beta' and 1 omega subunit. When a sigma factor is associated with the core the holoenzyme is formed, which can initiate transcription.

It carries out the reaction RNA(n) + a ribonucleoside 5'-triphosphate = RNA(n+1) + diphosphate. Its function is as follows. DNA-dependent RNA polymerase catalyzes the transcription of DNA into RNA using the four ribonucleoside triphosphates as substrates. This is DNA-directed RNA polymerase subunit alpha from Mycoplasma pneumoniae (strain ATCC 29342 / M129 / Subtype 1) (Mycoplasmoides pneumoniae).